We begin with the raw amino-acid sequence, 151 residues long: Superoxide dismutase [Cu-Zn] (151 aa).

Residue C6 is the site of S-palmitoyl cysteine attachment. Residues H45, H47, and H62 each contribute to the Cu cation site. Cysteines 56 and 144 form a disulfide. The Zn(2+) site is built by H62, H70, H79, and D82. H118 provides a ligand contact to Cu cation.

Belongs to the Cu-Zn superoxide dismutase family. As to quaternary structure, homodimer. It depends on Cu cation as a cofactor. Zn(2+) is required as a cofactor.

Its subcellular location is the cytoplasm. It is found in the nucleus. The catalysed reaction is 2 superoxide + 2 H(+) = H2O2 + O2. Its function is as follows. Destroys radicals which are normally produced within the cells and which are toxic to biological systems. This chain is Superoxide dismutase [Cu-Zn] (sod1), found in Xenopus tropicalis (Western clawed frog).